A 415-amino-acid polypeptide reads, in one-letter code: MSHKSAEMYELKKKVEELKSYRGRATELVSLYIPAGYDINKVMQQLREEYGTAQNIKSKSTRKNVLGALERAMQHLKLYKQTPENGLALFVGNVSEQEGVSDIKLWAIVPPEPLNVRLYRCDQTFVTEPLEEMLRVKDAYGLITVEKNEATIGLLRGKRIEVIDELTSNVPGKTRAGGQSARRYERIREQETHEFMKRIGEHANKAFLPLLEKGELRGIIIGGPGPTKEEFVEGDYLHHELRKKVIGVVDISYHGEYGLRELVEKASDILKDHEAVKERQLIQEFFKHLVKDTGMITYGEKEVRKALELGAVDKLLISEGYDKVRVRAKCNNCGWEELKTMSEGEFHVYKKQLTHCPKCGSQNITFEKWDVAEELIKMAEESGADVEIISLDTEEGQQFYKAFGGLGAILRYKIQ.

It belongs to the eukaryotic release factor 1 family. Heterodimer of two subunits, one of which binds GTP.

It localises to the cytoplasm. Directs the termination of nascent peptide synthesis (translation) in response to the termination codons UAA, UAG and UGA. The sequence is that of Peptide chain release factor subunit 1 from Thermococcus kodakarensis (strain ATCC BAA-918 / JCM 12380 / KOD1) (Pyrococcus kodakaraensis (strain KOD1)).